The following is a 210-amino-acid chain: HTH-type transcriptional repressor ComR (210 aa).

An HTH tetR-type domain is found at 18–78 (VFDRDAALDK…AVLDRYIDRF (61 aa)). The segment at residues 41-60 (SLADLVEATGAKAPTLYAEF) is a DNA-binding region (H-T-H motif).

Its activity is regulated as follows. Binding to the promoter region of BhsA/ComC is released in the presence of copper. Represses expression of BhsA/ComC by binding to its promoter region in the absence of copper. This is HTH-type transcriptional repressor ComR (comR) from Escherichia coli (strain K12).